Consider the following 428-residue polypeptide: MATIFKRVRLLNEQGELIQTDIKVAGGRIVQIAHDLHAEADDEVIDVDGQFVAPGFVDVHVHLREPGGEHKETIATGTLAAAKGGFTTIAAMPNTKPVPDTKQHMEWLVNRIRETAHVRVLPYASITVRQAGKQLVDFVALKEAGAFAFTDDGVGVQSARIMYEAMQQAAALDMPIVAHCEDETLTYKGCVHDGSFAKRYGLSGIPSVCESVHIARDVLLAEATGCHYHVCHISTKQSVRIVREAKQAGIRVTAEVTPHHLLLCDEDIPTLDANFKMNPPLRTKEDQQALIEGLLDGTIDFIATDHAPHTKEEKSEGMVLAPFGIVGLETAFPLLYTHFVEKGICTLKQLVDWLSKKPAETFRIDGGELKVGAKADFVVIDLHTEQAIDPNTFVSKGKNTPFAGWTCKGWPTMTIVAGKIVWQKGRGE.

Zn(2+) is bound by residues His60 and His62. Substrate is bound by residues 62-64 (HLR) and Asn94. Asp152, His179, and His232 together coordinate Zn(2+). Asn278 serves as a coordination point for substrate. Asp305 is a Zn(2+) binding site. The active site involves Asp305. Residues His309 and 323–324 (FG) each bind substrate.

This sequence belongs to the metallo-dependent hydrolases superfamily. DHOase family. Class I DHOase subfamily. It depends on Zn(2+) as a cofactor.

The catalysed reaction is (S)-dihydroorotate + H2O = N-carbamoyl-L-aspartate + H(+). Its pathway is pyrimidine metabolism; UMP biosynthesis via de novo pathway; (S)-dihydroorotate from bicarbonate: step 3/3. Its function is as follows. Catalyzes the reversible cyclization of carbamoyl aspartate to dihydroorotate. This chain is Dihydroorotase, found in Anoxybacillus flavithermus (strain DSM 21510 / WK1).